We begin with the raw amino-acid sequence, 277 residues long: Release factor glutamine methyltransferase (277 aa).

S-adenosyl-L-methionine is bound by residues 117-121, D140, W168, and N182; that span reads GTGCG. 182-185 serves as a coordination point for substrate; that stretch reads NPPY.

Belongs to the protein N5-glutamine methyltransferase family. PrmC subfamily.

The catalysed reaction is L-glutaminyl-[peptide chain release factor] + S-adenosyl-L-methionine = N(5)-methyl-L-glutaminyl-[peptide chain release factor] + S-adenosyl-L-homocysteine + H(+). Methylates the class 1 translation termination release factors RF1/PrfA and RF2/PrfB on the glutamine residue of the universally conserved GGQ motif. This chain is Release factor glutamine methyltransferase, found in Buchnera aphidicola subsp. Acyrthosiphon pisum (strain APS) (Acyrthosiphon pisum symbiotic bacterium).